The primary structure comprises 333 residues: tRNA N6-adenosine threonylcarbamoyltransferase (333 aa).

His111 and His115 together coordinate Fe cation. Substrate contacts are provided by residues 134 to 138, Asp167, Gly180, Asp184, and Asn273; that span reads VVSGG. Asp302 lines the Fe cation pocket.

It belongs to the KAE1 / TsaD family. Requires Fe(2+) as cofactor.

The protein localises to the cytoplasm. It carries out the reaction L-threonylcarbamoyladenylate + adenosine(37) in tRNA = N(6)-L-threonylcarbamoyladenosine(37) in tRNA + AMP + H(+). Its function is as follows. Required for the formation of a threonylcarbamoyl group on adenosine at position 37 (t(6)A37) in tRNAs that read codons beginning with adenine. Is involved in the transfer of the threonylcarbamoyl moiety of threonylcarbamoyl-AMP (TC-AMP) to the N6 group of A37, together with TsaE and TsaB. TsaD likely plays a direct catalytic role in this reaction. The chain is tRNA N6-adenosine threonylcarbamoyltransferase from Anaeromyxobacter sp. (strain Fw109-5).